A 636-amino-acid chain; its full sequence is Basic helix-loop-helix ARNT-like protein 2 (636 aa).

A disordered region spans residues 25 to 62; sequence VSSRVSPGTRPTAMGSFSSHMTEFPRKRKGSDSDPSQS. Positions 46–258 are interaction with PER2; that stretch reads TEFPRKRKGS…SPREKLIDAK (213 aa). A Nuclear localization signal motif is present at residues 49-54; the sequence is PRKRKG. The 54-residue stretch at 107–160 folds into the bHLH domain; that stretch reads AFREAHSQTEKRRRDKMNNLIEELSAMIPQCNPMARKLDKLTVLRMAVQHLRSL. The short motif at 177–187 is the Nuclear export signal 1 element; it reads LQDNELRHLIL. The PAS 1 domain maps to 178 to 250; the sequence is QDNELRHLIL…EQLSSFDISP (73 aa). Residue K287 forms a Glycyl lysine isopeptide (Lys-Gly) (interchain with G-Cter in SUMO2 and SUMO3) linkage. K294 is covalently cross-linked (Glycyl lysine isopeptide (Lys-Gly) (interchain with G-Cter in SUMO2)). Positions 357-427 constitute a PAS 2 domain; the sequence is VPQNSGEINV…DKHKAVLQSK (71 aa). A Nuclear export signal 2 motif is present at residues 392–400; the sequence is LGYLPQELL. Residues 432–475 form the PAC domain; that stretch reads TDSYKFRAKDGSFVTLKSQWFSFTNPWTKELEYIVSVNTLVLGH.

In terms of assembly, component of the circadian core oscillator, which includes the CRY proteins, CLOCK, or NPAS2, BMAL1 or BMAL2, CSNK1D and/or CSNK1E, TIMELESS and the PER proteins. Interacts directly with CLOCK to form the BMAL2-CLOCK transactivator. Can form heterodimers or homodimers which interact directly with CLOCK to form the transcription activator. Interacts with NPAS2 and HIF1A. Interacts with PER2. Expressed in fetal brain. Highly expressed in brain and placenta. Lower levels in heart, liver, thymus, kidney and lung. Located to endothelial cells and neuronal cells of the suprachiasmatic nucleus (SCN). Also detected in endothelial cells of the heart, lung and kidney. In the brain, specifically expressed in the thalamus, hippocampus and amygdala.

It localises to the nucleus. In terms of biological role, transcriptional activator which forms a core component of the circadian clock. The circadian clock, an internal time-keeping system, regulates various physiological processes through the generation of approximately 24 hour circadian rhythms in gene expression, which are translated into rhythms in metabolism and behavior. It is derived from the Latin roots 'circa' (about) and 'diem' (day) and acts as an important regulator of a wide array of physiological functions including metabolism, sleep, body temperature, blood pressure, endocrine, immune, cardiovascular, and renal function. Consists of two major components: the central clock, residing in the suprachiasmatic nucleus (SCN) of the brain, and the peripheral clocks that are present in nearly every tissue and organ system. Both the central and peripheral clocks can be reset by environmental cues, also known as Zeitgebers (German for 'timegivers'). The predominant Zeitgeber for the central clock is light, which is sensed by retina and signals directly to the SCN. The central clock entrains the peripheral clocks through neuronal and hormonal signals, body temperature and feeding-related cues, aligning all clocks with the external light/dark cycle. Circadian rhythms allow an organism to achieve temporal homeostasis with its environment at the molecular level by regulating gene expression to create a peak of protein expression once every 24 hours to control when a particular physiological process is most active with respect to the solar day. Transcription and translation of core clock components (CLOCK, NPAS2, BMAL1, BMAL2, PER1, PER2, PER3, CRY1 and CRY2) plays a critical role in rhythm generation, whereas delays imposed by post-translational modifications (PTMs) are important for determining the period (tau) of the rhythms (tau refers to the period of a rhythm and is the length, in time, of one complete cycle). A diurnal rhythm is synchronized with the day/night cycle, while the ultradian and infradian rhythms have a period shorter and longer than 24 hours, respectively. Disruptions in the circadian rhythms contribute to the pathology of cardiovascular diseases, cancer, metabolic syndromes and aging. A transcription/translation feedback loop (TTFL) forms the core of the molecular circadian clock mechanism. Transcription factors, CLOCK or NPAS2 and BMAL1 or BMAL2, form the positive limb of the feedback loop, act in the form of a heterodimer and activate the transcription of core clock genes and clock-controlled genes (involved in key metabolic processes), harboring E-box elements (5'-CACGTG-3') within their promoters. The core clock genes: PER1/2/3 and CRY1/2 which are transcriptional repressors form the negative limb of the feedback loop and interact with the CLOCK|NPAS2-BMAL1|BMAL2 heterodimer inhibiting its activity and thereby negatively regulating their own expression. This heterodimer also activates nuclear receptors NR1D1/2 and RORA/B/G, which form a second feedback loop and which activate and repress BMAL1 transcription, respectively. The CLOCK-BMAL2 heterodimer activates the transcription of SERPINE1/PAI1 and BHLHE40/DEC1. This chain is Basic helix-loop-helix ARNT-like protein 2, found in Homo sapiens (Human).